A 647-amino-acid polypeptide reads, in one-letter code: Putative ferric-chelate reductase 1 homolog (647 aa).

A helical transmembrane segment spans residues 10 to 30 (WLATLVTALLAVAIWPDPGQS). In terms of domain architecture, Reelin spans 25–195 (PDPGQSLPQG…AAPPLPTQSP (171 aa)). 2 N-linked (GlcNAc...) asparagine glycosylation sites follow: Asn127 and Asn158. One can recognise a DOMON domain in the interval 245-368 (TKSCTSITVV…GKYHLLVASG (124 aa)). The Cytochrome b561 domain occupies 372–570 (KENSVGYHDI…HLIFSIGGMA (199 aa)). Residues 408 to 428 (LHGAFMIAAWIGTTSLGIIFA) traverse the membrane as a helical segment. Residues His409 and His450 each contribute to the heme b site. 5 consecutive transmembrane segments (helical) span residues 452 to 472 (LLMVTTWSLTVAAYVLIWVEL), 480 to 500 (HSIIGLITVILCFIQPIGALF), 515 to 535 (GHWLGGNLAHILGIVTIFFSV), 548 to 568 (WILVSFVVVHVLVHLIFSIGG), and 616 to 636 (LLGVYGVVLILFVTVLILLVV). Heme b is bound by residues His480 and His516.

It belongs to the FRRS1 family. Heme b is required as a cofactor.

The protein localises to the membrane. Functionally, putative ferric-chelate reductases reduce Fe(3+) to Fe(2+) before its transport from the endosome to the cytoplasm. This Drosophila melanogaster (Fruit fly) protein is Putative ferric-chelate reductase 1 homolog.